The primary structure comprises 504 residues: Pre-mRNA-processing factor 19 (504 aa).

Ser2 carries the post-translational modification N-acetylserine. One can recognise a U-box domain in the interval 2–73; that stretch reads SLICSISNEV…KPPSATSIPA (72 aa). Residues 68–223 are may mediate interaction with PSMC5; that stretch reads ATSIPAILKA…VGLHSASIPG (156 aa). N6-acetyllysine is present on residues Lys122, Lys179, Lys244, and Lys261. Residues 219 to 259 form a WD 1 repeat; the sequence is ASIPGILALDLCPSDTNKILTGGADKNVVVFDKSTEQILAT. WD repeat units follow at residues 262–301, 304–345, 348–387, 390–429, 433–472, and 473–503; these read GHTK…CVQV, AHES…TKVT, TSGC…NVAN, GHSG…NFKT, DNNF…LHFT, and EHSG…KFYS.

The protein belongs to the WD repeat PRP19 family. In terms of assembly, homotetramer. Component of activated, catalytic and post-catalytic spliceosomes. Component of the Prp19 complex/PRP19C/Nineteen complex/NTC and related complexes described as PRP19-CDC5L splicing complex and PSO4 complex. A homotetramer of PRPF19, CDC5L, PLRG1 and BCAS2 constitute the core of those complexes. The interaction with CDC5L, PLRG1 and BCAS2 is direct within this core complex. At least three less stably associated proteins CTNNBL1, CWC15 and HSPA8 are found in the Prp19 complex. The Prp19 complex associates with the spliceosome during its assembly and remodeling recruiting additional proteins. Component of the XAB2 complex, a multimeric protein complex composed of XAB2, PRPF19, AQR, ZNF830, ISY1, and PPIE. Interacts with CWC22 and EIF4A3 in an RNA-independent manner. Interacts with RPA1 and RPA2; the PRP19-CDC5L complex is recruited to the sites of DNA repair where it interacts with the replication protein A complex (RPA). Interacts with SETMAR; required for SETMAR recruitment to site of DNA damage. Interacts with U2AF2; the interaction is direct and recruits the Prp19 complex to RNA polymerase II C-terminal domain (CTD) and the pre-mRNA. Interacts with PRPF3. Interacts with APEX1, DNTT and PSMB4. Interacts with KNSTRN. Interacts with PSMC5. Isoform 2 (via N-terminus) interacts with PPIA. Isoform 2 does not interact with CDC5L. Interacts with KHDC4. Interacts with USB1. Interacts with DDX41. As to expression, expressed in white and brown adipose tissues, brain and to a lower extent in liver, kidney, muscle, lung and spleen (at protein level).

It localises to the nucleus. Its subcellular location is the nucleoplasm. The protein localises to the cytoplasm. It is found in the cytoskeleton. The protein resides in the spindle. It localises to the lipid droplet. It carries out the reaction S-ubiquitinyl-[E2 ubiquitin-conjugating enzyme]-L-cysteine + [acceptor protein]-L-lysine = [E2 ubiquitin-conjugating enzyme]-L-cysteine + N(6)-ubiquitinyl-[acceptor protein]-L-lysine.. The protein operates within protein modification; protein ubiquitination. Functionally, ubiquitin-protein ligase which is a core component of several complexes mainly involved in pre-mRNA splicing and DNA repair. Required for pre-mRNA splicing as component of the spliceosome. Core component of the PRP19C/Prp19 complex/NTC/Nineteen complex which is part of the spliceosome and participates in its assembly, its remodeling and is required for its activity. During assembly of the spliceosome, mediates 'Lys-63'-linked polyubiquitination of the U4 spliceosomal protein PRPF3. Ubiquitination of PRPF3 allows its recognition by the U5 component PRPF8 and stabilizes the U4/U5/U6 tri-snRNP spliceosomal complex. Recruited to RNA polymerase II C-terminal domain (CTD) and the pre-mRNA, it may also couple the transcriptional and spliceosomal machineries. The XAB2 complex, which contains PRPF19, is also involved in pre-mRNA splicing, transcription and transcription-coupled repair. Beside its role in pre-mRNA splicing PRPF19, as part of the PRP19-CDC5L complex, plays a role in the DNA damage response/DDR. It is recruited to the sites of DNA damage by the RPA complex where PRPF19 directly ubiquitinates RPA1 and RPA2. 'Lys-63'-linked polyubiquitination of the RPA complex allows the recruitment of the ATR-ATRIP complex and the activation of ATR, a master regulator of the DNA damage response. May also play a role in DNA double-strand break (DSB) repair by recruiting the repair factor SETMAR to altered DNA. As part of the PSO4 complex may also be involved in the DNA interstrand cross-links/ICLs repair process. In addition, may also mediate 'Lys-48'-linked polyubiquitination of substrates and play a role in proteasomal degradation. May play a role in the biogenesis of lipid droplets. May play a role in neural differentiation possibly through its function as part of the spliceosome. In terms of biological role, forced expression leads to suppression of neuronal differentiation, and on the contrary to stimulation of astroglial cell differentiation in retinoic acid-primed P19 cells. The sequence is that of Pre-mRNA-processing factor 19 from Mus musculus (Mouse).